The following is a 366-amino-acid chain: 5-hydroxytryptamine receptor 1F (366 aa).

The Extracellular segment spans residues 1-24 (MDFLNSSDQNLTSEELLHRMPSKI). Residues Asn-5 and Asn-10 are each glycosylated (N-linked (GlcNAc...) asparagine). The chain crosses the membrane as a helical span at residues 25–49 (LVSLTLSGLALMTTTINSLVIAAII). Over 50 to 59 (VTRKLHHPAN) the chain is Cytoplasmic. Residues 60-81 (YLICSLAVTDFLVAVLVMPFSI) traverse the membrane as a helical segment. Topologically, residues 82 to 96 (VYIVRESWIMGQVLC) are extracellular. Cys-96 and Cys-172 form a disulfide bridge. Residues 97 to 119 (DIWLSVDIICCTCSILHLSAIAL) traverse the membrane as a helical segment. Residues Asp-103 and Cys-107 each contribute to the serotonin site. A DRY motif; important for ligand-induced conformation changes motif is present at residues 120 to 122 (DRY). Topologically, residues 120-139 (DRYRAITDAVEYARKRTPKQ) are cytoplasmic. Residues 140-159 (AGIMITIVWIISVFISMPPL) form a helical membrane-spanning segment. Over 160–178 (FWRHQGTSRDDECIIKHDH) the chain is Extracellular. Residues 179-202 (IVSTIYSTFGAFYIPLVLILILYY) traverse the membrane as a helical segment. Residues 203–291 (KIYKAAKTLY…KISGTRERKA (89 aa)) are Cytoplasmic-facing. A helical transmembrane segment spans residues 292–315 (ATTLGLILGAFVICWLPFFVKELV). At 316–327 (VNVCEKCKISEE) the chain is on the extracellular side. A helical membrane pass occupies residues 328 to 350 (MANFLAWLGYLNSLINPLIYTIF). The short motif at 343–347 (NPLIY) is the NPxxY motif; important for ligand-induced conformation changes and signaling element. Residues 351-366 (NEDFKKAFQKLVRCQY) lie on the Cytoplasmic side of the membrane.

Belongs to the G-protein coupled receptor 1 family.

It is found in the cell membrane. Functionally, G-protein coupled receptor for 5-hydroxytryptamine (serotonin). Also functions as a receptor for various alkaloids and psychoactive substances. Ligand binding causes a conformation change that triggers signaling via guanine nucleotide-binding proteins (G proteins) and modulates the activity of downstream effectors, such as adenylate cyclase. HTR1F is coupled to G(i)/G(o) G alpha proteins and mediates inhibitory neurotransmission by inhibiting adenylate cyclase activity. The protein is 5-hydroxytryptamine receptor 1F (HTR1F) of Cavia porcellus (Guinea pig).